Here is a 223-residue protein sequence, read N- to C-terminus: Family of serine hydrolases 2 (223 aa).

Active-site charge relay system residues include Ser110, Asp174, and His203.

This sequence belongs to the AB hydrolase 3 family.

Its subcellular location is the cytoplasm. Its function is as follows. Serine hydrolase of unknown specificity. In Saccharomyces cerevisiae (strain ATCC 204508 / S288c) (Baker's yeast), this protein is Family of serine hydrolases 2 (FSH2).